The sequence spans 178 residues: GTP-dependent dephospho-CoA kinase (178 aa).

Positions 55, 57, 74, 76, and 127 each coordinate GTP.

This sequence belongs to the GTP-dependent DPCK family.

It carries out the reaction 3'-dephospho-CoA + GTP = GDP + CoA + H(+). The protein operates within cofactor biosynthesis; coenzyme A biosynthesis. Catalyzes the GTP-dependent phosphorylation of the 3'-hydroxyl group of dephosphocoenzyme A to form coenzyme A (CoA). The polypeptide is GTP-dependent dephospho-CoA kinase (Saccharolobus islandicus (strain Y.N.15.51 / Yellowstone #2) (Sulfolobus islandicus)).